A 202-amino-acid polypeptide reads, in one-letter code: Ribonuclease HII (202 aa).

In terms of domain architecture, RNase H type-2 spans Met-1–Gly-195. The a divalent metal cation site is built by Asp-7, Glu-8, and Asp-103.

Belongs to the RNase HII family. Requires Mn(2+) as cofactor. Mg(2+) serves as cofactor.

It is found in the cytoplasm. The enzyme catalyses Endonucleolytic cleavage to 5'-phosphomonoester.. Endonuclease that specifically degrades the RNA of RNA-DNA hybrids. The polypeptide is Ribonuclease HII (Synechococcus sp. (strain RCC307)).